The chain runs to 335 residues: Phosphate acyltransferase (335 aa).

The protein belongs to the PlsX family. As to quaternary structure, homodimer. Probably interacts with PlsY.

It localises to the cytoplasm. It carries out the reaction a fatty acyl-[ACP] + phosphate = an acyl phosphate + holo-[ACP]. Its pathway is lipid metabolism; phospholipid metabolism. Functionally, catalyzes the reversible formation of acyl-phosphate (acyl-PO(4)) from acyl-[acyl-carrier-protein] (acyl-ACP). This enzyme utilizes acyl-ACP as fatty acyl donor, but not acyl-CoA. The sequence is that of Phosphate acyltransferase from Brevibacillus brevis (strain 47 / JCM 6285 / NBRC 100599).